A 165-amino-acid chain; its full sequence is Lipoprotein signal peptidase (165 aa).

Helical transmembrane passes span S9 to V29, W65 to L85, and A100 to V120. Active-site residues include D121 and D139. The chain crosses the membrane as a helical span at residues V134 to F154.

This sequence belongs to the peptidase A8 family.

Its subcellular location is the cell inner membrane. The catalysed reaction is Release of signal peptides from bacterial membrane prolipoproteins. Hydrolyzes -Xaa-Yaa-Zaa-|-(S,diacylglyceryl)Cys-, in which Xaa is hydrophobic (preferably Leu), and Yaa (Ala or Ser) and Zaa (Gly or Ala) have small, neutral side chains.. Its pathway is protein modification; lipoprotein biosynthesis (signal peptide cleavage). This protein specifically catalyzes the removal of signal peptides from prolipoproteins. The chain is Lipoprotein signal peptidase from Pasteurella multocida (strain Pm70).